The primary structure comprises 165 residues: Glutamyl-tRNA(Gln) amidotransferase subunit F, mitochondrial (165 aa).

The span at 137–153 (VSDQRGERGFDTSELRT) shows a compositional bias: basic and acidic residues. Residues 137–165 (VSDQRGERGFDTSELRTRINRAKSTAEKE) form a disordered region.

Belongs to the GatF family. In terms of assembly, subunit of the heterotrimeric GatFAB amidotransferase (AdT) complex, composed of A, B and F subunits.

It localises to the mitochondrion inner membrane. The enzyme catalyses L-glutamyl-tRNA(Gln) + L-glutamine + ATP + H2O = L-glutaminyl-tRNA(Gln) + L-glutamate + ADP + phosphate + H(+). Allows the formation of correctly charged Gln-tRNA(Gln) through the transamidation of misacylated Glu-tRNA(Gln) in the mitochondria. The reaction takes place in the presence of glutamine and ATP through an activated gamma-phospho-Glu-tRNA(Gln). Required for proper protein synthesis within the mitochondrion. The sequence is that of Glutamyl-tRNA(Gln) amidotransferase subunit F, mitochondrial from Clavispora lusitaniae (strain ATCC 42720) (Yeast).